The following is a 115-amino-acid chain: DNA repair protein homolog YozK (115 aa).

In terms of domain architecture, UmuC spans 12-115 (ILCVDMKSFY…EKCVHTYSID (104 aa)). 2 residues coordinate Mg(2+): Asp16 and Asp115.

It belongs to the DNA polymerase type-Y family. It depends on Mg(2+) as a cofactor.

This is DNA repair protein homolog YozK (yozK) from Bacillus subtilis (strain 168).